Here is a 70-residue protein sequence, read N- to C-terminus: Large ribosomal subunit protein eL38 (70 aa).

It belongs to the eukaryotic ribosomal protein eL38 family.

The protein is Large ribosomal subunit protein eL38 (rpl-38) of Ostertagia ostertagi (Brown stomach worm).